The sequence spans 394 residues: Protein NDRG1 (394 aa).

Residue S2 is modified to N-acetylserine. A phosphoserine mark is found at S2, S319, and S326. Residues 325-394 are disordered; sequence RSRTASGSSV…AGPKSMEVSC (70 aa). Over residues 327 to 339 the composition is skewed to polar residues; sequence RTASGSSVTSLEG. A Phosphothreonine modification is found at T328. S330 is subject to Phosphoserine. At S332 the chain carries Phosphoserine; by SGK1. S333 carries the phosphoserine modification. The residue at position 335 (T335) is a Phosphothreonine. At S336 the chain carries Phosphoserine. 3 tandem repeats follow at residues 339–348, 349–358, and 359–368. Positions 339-368 are 3 X 10 AA tandem repeats of G-[PST]-R-S-R-S-H-T-S-E; the sequence is GTRSRSHTSEGPRSRSHTSEGSRSRSHTSE. T340 carries the phosphothreonine modification. S342 is modified (phosphoserine). Over residues 345-371 the composition is skewed to basic and acidic residues; the sequence is HTSEGPRSRSHTSEGSRSRSHTSEDAR. T346 carries the post-translational modification Phosphothreonine. S352 carries the post-translational modification Phosphoserine. T356 carries the phosphothreonine; by SGK1 modification. 2 positions are modified to phosphoserine: S362 and S364. Phosphothreonine occurs at positions 366 and 375. The segment covering 374 to 386 has biased composition (polar residues); the sequence is ITPSSGATGNNAG.

This sequence belongs to the NDRG family. As to quaternary structure, interacts with RAB4A (membrane-bound form); the interaction involves NDRG1 in vesicular recycling of CDH1. Interacts with APOA1, APOA2, PRA1 and RTN1. Post-translationally, under stress conditions, phosphorylated in the C-terminal on many serine and threonine residues. Phosphorylated in vitro by PKA. Phosphorylation enhanced by increased intracellular cAMP levels. Homocysteine induces dephosphorylation. Phosphorylation by SGK1 is cell cycle dependent.

The protein resides in the cytoplasm. Its subcellular location is the cytosol. It localises to the cytoskeleton. It is found in the microtubule organizing center. The protein localises to the centrosome. The protein resides in the nucleus. Its subcellular location is the cell membrane. Its function is as follows. Stress-responsive protein involved in hormone responses, cell growth, and differentiation. Acts as a tumor suppressor in many cell types. Necessary but not sufficient for p53/TP53-mediated caspase activation and apoptosis. Has a role in cell trafficking notably of the Schwann cell and is necessary for the maintenance and development of the peripheral nerve myelin sheath. Required for vesicular recycling of CDH1 and TF. May also function in lipid trafficking. Protects cells from spindle disruption damage. Functions in p53/TP53-dependent mitotic spindle checkpoint. Regulates microtubule dynamics and maintains euploidy. This Rattus norvegicus (Rat) protein is Protein NDRG1 (Ndrg1).